Consider the following 38-residue polypeptide: 4 kDa defensin (38 aa).

Intrachain disulfides connect cysteine 4–cysteine 25, cysteine 11–cysteine 33, and cysteine 15–cysteine 35.

The protein belongs to the invertebrate defensin family. Type 2 subfamily.

The protein resides in the secreted. In terms of biological role, dual-function peptide with antimicrobial and potassium channel-blocking activities. Shows inhibitory activity against Gram-positive bacteria such as M.luteus, S.aureus, B.subtilis, and M.luteus as well as methicillin-resistant S.aureus (MIC=0.1-20 uM). Does not act on bacteria by disrupting membranes. Also moderately inhibits Kv1.1/KCNA1, Kv1.2/KCNA2, and Kv1.3/KCNA3 potassium channels. Inhibits potassium channels by interacting with the pore region. Does not show hemolytic activity. The polypeptide is 4 kDa defensin (Leiurus hebraeus (Hebrew deathstalker scorpion)).